Here is an 89-residue protein sequence, read N- to C-terminus: DNA-directed RNA polymerase subunit omega (89 aa).

The protein belongs to the RNA polymerase subunit omega family. The RNAP catalytic core consists of 2 alpha, 1 beta, 1 beta' and 1 omega subunit. When a sigma factor is associated with the core the holoenzyme is formed, which can initiate transcription.

The enzyme catalyses RNA(n) + a ribonucleoside 5'-triphosphate = RNA(n+1) + diphosphate. Promotes RNA polymerase assembly. Latches the N- and C-terminal regions of the beta' subunit thereby facilitating its interaction with the beta and alpha subunits. The chain is DNA-directed RNA polymerase subunit omega (rpoZ) from Pasteurella multocida (strain Pm70).